The primary structure comprises 348 residues: Phosphoribosylformylglycinamidine cyclo-ligase (348 aa).

The protein belongs to the AIR synthase family.

The protein localises to the cytoplasm. It carries out the reaction 2-formamido-N(1)-(5-O-phospho-beta-D-ribosyl)acetamidine + ATP = 5-amino-1-(5-phospho-beta-D-ribosyl)imidazole + ADP + phosphate + H(+). It participates in purine metabolism; IMP biosynthesis via de novo pathway; 5-amino-1-(5-phospho-D-ribosyl)imidazole from N(2)-formyl-N(1)-(5-phospho-D-ribosyl)glycinamide: step 2/2. The protein is Phosphoribosylformylglycinamidine cyclo-ligase of Geobacter sulfurreducens (strain ATCC 51573 / DSM 12127 / PCA).